A 75-amino-acid chain; its full sequence is MKFQMIAAVLLIAFCLCVVVTARMELQDVEDMKNGSFQKRRTCIDTIPKSRCTAFQCKNSMKYRLSFCRKTCGTC.

The N-terminal stretch at 1–22 is a signal peptide; the sequence is MKFQMIAAVLLIAFCLCVVVTA. The propeptide occupies 23–40; that stretch reads RMELQDVEDMKNGSFQKR. The 33-residue stretch at 43-75 folds into the ShKT domain; it reads CIDTIPKSRCTAFQCKNSMKYRLSFCRKTCGTC. Cystine bridges form between Cys-43-Cys-75, Cys-52-Cys-68, and Cys-57-Cys-72.

The protein belongs to the sea anemone type 1 potassium channel toxin family. Type 1a subfamily.

It localises to the secreted. The protein localises to the nematocyst. Functionally, inhibits voltage-gated potassium channels (Kv) with higher potency for Kv1.1/KCNA1 and Kv1.3/KCNA3. The protein is Kappa-thalatoxin-Cad2a of Cryptodendrum adhaesivum (Adhesive sea anemone).